The primary structure comprises 117 residues: Ribonuclease P protein component (117 aa).

The protein belongs to the RnpA family. Consists of a catalytic RNA component (M1 or rnpB) and a protein subunit.

It catalyses the reaction Endonucleolytic cleavage of RNA, removing 5'-extranucleotides from tRNA precursor.. In terms of biological role, RNaseP catalyzes the removal of the 5'-leader sequence from pre-tRNA to produce the mature 5'-terminus. It can also cleave other RNA substrates such as 4.5S RNA. The protein component plays an auxiliary but essential role in vivo by binding to the 5'-leader sequence and broadening the substrate specificity of the ribozyme. The sequence is that of Ribonuclease P protein component from Aliivibrio salmonicida (strain LFI1238) (Vibrio salmonicida (strain LFI1238)).